The following is a 439-amino-acid chain: Orphan methyltransferase M.SPRI (439 aa).

An SAM-dependent MTase C5-type domain is found at 4-436; sequence LRVMSLFSGI…KELIHTYINK (433 aa). The active site involves cysteine 78.

This sequence belongs to the class I-like SAM-binding methyltransferase superfamily. C5-methyltransferase family. Monomer.

The catalysed reaction is a 2'-deoxycytidine in DNA + S-adenosyl-L-methionine = a 5-methyl-2'-deoxycytidine in DNA + S-adenosyl-L-homocysteine + H(+). Functionally, a methyltransferase that methylates the C-1 in the sequence 5'-GGCC-3' and both cytosines in the sequence 5'-CCGG-3'. A methyltransferase that methylates C-3 within the sequence 5'-GGCC-3', C-1 in 5'-CCGG-3' and C-2 in 5'-CCWGG-3'. Modification confers resistance against restriction enzymes that recognize these sequences. In Bacillus phage SPR (Bacteriophage SPR), this protein is Orphan methyltransferase M.SPRI.